The chain runs to 183 residues: Nucleoside triphosphate pyrophosphatase (183 aa).

The active-site Proton acceptor is the Asp-71.

It belongs to the Maf family. A divalent metal cation is required as a cofactor.

It is found in the cytoplasm. The enzyme catalyses a ribonucleoside 5'-triphosphate + H2O = a ribonucleoside 5'-phosphate + diphosphate + H(+). It catalyses the reaction a 2'-deoxyribonucleoside 5'-triphosphate + H2O = a 2'-deoxyribonucleoside 5'-phosphate + diphosphate + H(+). Nucleoside triphosphate pyrophosphatase. May have a dual role in cell division arrest and in preventing the incorporation of modified nucleotides into cellular nucleic acids. The sequence is that of Nucleoside triphosphate pyrophosphatase from Campylobacter jejuni subsp. doylei (strain ATCC BAA-1458 / RM4099 / 269.97).